The chain runs to 359 residues: Probable D-xylulose reductase A (359 aa).

Zn(2+) is bound by residues Cys-47, His-72, and Glu-73. NAD(+) is bound at residue 182 to 187 (GAGPVG).

This sequence belongs to the zinc-containing alcohol dehydrogenase family. Zn(2+) is required as a cofactor.

The catalysed reaction is xylitol + NAD(+) = D-xylulose + NADH + H(+). The protein operates within carbohydrate degradation; L-arabinose degradation via L-arabinitol; D-xylulose 5-phosphate from L-arabinose (fungal route): step 4/5. Functionally, xylitol dehydrogenase which catalyzes the conversion of xylitol to D-xylulose. Xylose is a major component of hemicelluloses such as xylan. Most fungi utilize D-xylose via three enzymatic reactions, xylose reductase (XR), xylitol dehydrogenase (XDH), and xylulokinase, to form xylulose 5-phosphate, which enters pentose phosphate pathway. The protein is Probable D-xylulose reductase A (xdhA) of Emericella nidulans (strain FGSC A4 / ATCC 38163 / CBS 112.46 / NRRL 194 / M139) (Aspergillus nidulans).